The following is a 592-amino-acid chain: Aspartate--tRNA ligase (592 aa).

L-aspartate is bound at residue glutamate 171. The segment at 195–198 is aspartate; it reads QLFK. Arginine 217 contacts L-aspartate. Residues 217 to 219 and glutamine 226 each bind ATP; that span reads RDE. L-aspartate is bound at residue histidine 448. An ATP-binding site is contributed by glutamate 482. L-aspartate is bound at residue arginine 489. 534–537 serves as a coordination point for ATP; sequence GLDR.

It belongs to the class-II aminoacyl-tRNA synthetase family. Type 1 subfamily. Homodimer.

Its subcellular location is the cytoplasm. It catalyses the reaction tRNA(Asp) + L-aspartate + ATP = L-aspartyl-tRNA(Asp) + AMP + diphosphate. Catalyzes the attachment of L-aspartate to tRNA(Asp) in a two-step reaction: L-aspartate is first activated by ATP to form Asp-AMP and then transferred to the acceptor end of tRNA(Asp). The protein is Aspartate--tRNA ligase of Vibrio campbellii (strain ATCC BAA-1116).